The sequence spans 286 residues: Bifunctional protein FolD (286 aa).

NADP(+) is bound by residues 166 to 168, Ser191, and Ile232; that span reads GQS.

The protein belongs to the tetrahydrofolate dehydrogenase/cyclohydrolase family. As to quaternary structure, homodimer.

The enzyme catalyses (6R)-5,10-methylene-5,6,7,8-tetrahydrofolate + NADP(+) = (6R)-5,10-methenyltetrahydrofolate + NADPH. The catalysed reaction is (6R)-5,10-methenyltetrahydrofolate + H2O = (6R)-10-formyltetrahydrofolate + H(+). Its pathway is one-carbon metabolism; tetrahydrofolate interconversion. Its function is as follows. Catalyzes the oxidation of 5,10-methylenetetrahydrofolate to 5,10-methenyltetrahydrofolate and then the hydrolysis of 5,10-methenyltetrahydrofolate to 10-formyltetrahydrofolate. This is Bifunctional protein FolD from Alkalilimnicola ehrlichii (strain ATCC BAA-1101 / DSM 17681 / MLHE-1).